The sequence spans 76 residues: Acyl carrier protein (76 aa).

The Carrier domain occupies 1-74 (MFDKLKEIIA…DVVEYITEHT (74 aa)). Serine 34 bears the O-(pantetheine 4'-phosphoryl)serine mark.

Belongs to the acyl carrier protein (ACP) family. 4'-phosphopantetheine is transferred from CoA to a specific serine of apo-ACP by AcpS. This modification is essential for activity because fatty acids are bound in thioester linkage to the sulfhydryl of the prosthetic group.

It is found in the cytoplasm. It functions in the pathway lipid metabolism; fatty acid biosynthesis. Its function is as follows. Carrier of the growing fatty acid chain in fatty acid biosynthesis. The chain is Acyl carrier protein from Clostridium perfringens (strain ATCC 13124 / DSM 756 / JCM 1290 / NCIMB 6125 / NCTC 8237 / Type A).